The following is a 221-amino-acid chain: Large ribosomal subunit protein uL16x (221 aa).

The protein belongs to the universal ribosomal protein uL16 family. In terms of assembly, component of the small ribosomal subunit. Mature ribosomes consist of a small (40S) and a large (60S) subunit. The 40S subunit contains about 33 different proteins and 1 molecule of RNA (18S). The 60S subunit contains about 49 different proteins and 3 molecules of RNA (25S, 5.8S and 5S).

The sequence is that of Large ribosomal subunit protein uL16x (RPL10C) from Arabidopsis thaliana (Mouse-ear cress).